The sequence spans 314 residues: Homeobox-leucine zipper protein HAT7 (314 aa).

Residues 77-109 (HHHLTQKSPTTTNNMNDQDQVGEEDNLSDDGSH) form a disordered region. The segment covering 82 to 95 (QKSPTTTNNMNDQD) has biased composition (polar residues). Positions 112 to 171 (LGEKKKRLNLEQVRALEKSFELGNKLEPERKMQLAKALGLQPRQIAIWFQNRRARWKTKQ) form a DNA-binding region, homeobox. The tract at residues 172-207 (LERDYDSLKKQFDVLKSDNDSLLAHNKKLHAELVAL) is leucine-zipper.

It belongs to the HD-ZIP homeobox family. Class I subfamily. In terms of tissue distribution, expressed predominantly in flowers, and in the cortex of the root and the stem.

It localises to the nucleus. In terms of biological role, probable transcription factor. The polypeptide is Homeobox-leucine zipper protein HAT7 (HAT7) (Arabidopsis thaliana (Mouse-ear cress)).